Reading from the N-terminus, the 400-residue chain is Endophilin-B2 (400 aa).

Met1 carries the post-translational modification N-acetylmethionine. Residues 1–27 form a membrane-binding amphipathic helix region; the sequence is MDFNMKKLASDAGIFFTRAVQFTEEKF. Ser10 carries the phosphoserine modification. The 264-residue stretch at 24–287 folds into the BAR domain; sequence EEKFGQAEKT…LGSSQGAIFP (264 aa). Residues 205-234 are a coiled coil; it reads SASALWNDEVDKAEQELRVAQTEFDRQAEV. An SH3 domain is found at 340–400; that stretch reads SGTRKARVLY…VPVTYLELLS (61 aa). At Ser400 the chain carries Phosphoserine.

Belongs to the endophilin family. In terms of assembly, homodimer, and heterodimer with SH3GLB1.

Its subcellular location is the cytoplasm. The protein is Endophilin-B2 (Sh3glb2) of Mus musculus (Mouse).